The primary structure comprises 353 residues: Phosphate acyltransferase (353 aa).

This sequence belongs to the PlsX family. As to quaternary structure, homodimer. Probably interacts with PlsY.

It localises to the cytoplasm. The enzyme catalyses a fatty acyl-[ACP] + phosphate = an acyl phosphate + holo-[ACP]. Its pathway is lipid metabolism; phospholipid metabolism. Catalyzes the reversible formation of acyl-phosphate (acyl-PO(4)) from acyl-[acyl-carrier-protein] (acyl-ACP). This enzyme utilizes acyl-ACP as fatty acyl donor, but not acyl-CoA. The protein is Phosphate acyltransferase of Nitrosospira multiformis (strain ATCC 25196 / NCIMB 11849 / C 71).